The following is a 320-amino-acid chain: Malate dehydrogenase (320 aa).

Residues 10-15 and Asp-34 contribute to the NAD(+) site; that span reads GSGMIG. Residues Arg-83 and Arg-89 each coordinate substrate. NAD(+) contacts are provided by residues Asn-96 and 119 to 121; that span reads ITN. Substrate contacts are provided by Asn-121 and Arg-152. The Proton acceptor role is filled by His-176.

It belongs to the LDH/MDH superfamily. MDH type 3 family.

The catalysed reaction is (S)-malate + NAD(+) = oxaloacetate + NADH + H(+). Catalyzes the reversible oxidation of malate to oxaloacetate. The protein is Malate dehydrogenase of Brucella anthropi (strain ATCC 49188 / DSM 6882 / CCUG 24695 / JCM 21032 / LMG 3331 / NBRC 15819 / NCTC 12168 / Alc 37) (Ochrobactrum anthropi).